The chain runs to 270 residues: MMNRIHAVILDWAGTTVDFGSFAPTQIFVEAFRQAFDVEITLAEARVPMGLGKWQHIEALGKLPAVDARWQAKFSRSMSAADIDAIYAAFMPLQIAKVVDFSSPIAGVIDTIAALRAEGIKIGSCSGYPRAVMERLVPAAAGHGYCPDHWVATDDLAAGGRPGPWMALQNVIALGIDAVAHCVKVDDAAPGISEGLNAGMWTVGLAVSGNEFGATWDAYQTMSKEDVAVRREHAASKLYAAGAHYVVDSLADLPEVIAHINARLAQGERP.

Asp-11 (nucleophile) is an active-site residue. Positions 11 and 13 each coordinate Mg(2+). Lys-53 functions as the Schiff-base intermediate with substrate in the catalytic mechanism. Position 187 (Asp-187) interacts with Mg(2+).

It belongs to the HAD-like hydrolase superfamily. PhnX family. Homodimer. The cofactor is Mg(2+).

It catalyses the reaction phosphonoacetaldehyde + H2O = acetaldehyde + phosphate + H(+). In terms of biological role, involved in phosphonate degradation. The protein is Phosphonoacetaldehyde hydrolase of Salmonella paratyphi C (strain RKS4594).